A 228-amino-acid polypeptide reads, in one-letter code: Geranylgeranylglyceryl phosphate synthase (228 aa).

Residue K11 participates in sn-glycerol 1-phosphate binding. The Mg(2+) site is built by D13 and T39. Residues 159–164, G189, and 209–210 each bind sn-glycerol 1-phosphate; these read YIEYSG and GN.

Belongs to the GGGP/HepGP synthase family. Group I subfamily. The cofactor is Mg(2+).

It is found in the cytoplasm. The enzyme catalyses sn-glycerol 1-phosphate + (2E,6E,10E)-geranylgeranyl diphosphate = sn-3-O-(geranylgeranyl)glycerol 1-phosphate + diphosphate. It participates in membrane lipid metabolism; glycerophospholipid metabolism. Its function is as follows. Prenyltransferase that catalyzes the transfer of the geranylgeranyl moiety of geranylgeranyl diphosphate (GGPP) to the C3 hydroxyl of sn-glycerol-1-phosphate (G1P). This reaction is the first ether-bond-formation step in the biosynthesis of archaeal membrane lipids. The chain is Geranylgeranylglyceryl phosphate synthase from Methanoregula boonei (strain DSM 21154 / JCM 14090 / 6A8).